The primary structure comprises 212 residues: NEDD4 family-interacting protein 1 (212 aa).

The segment covering 1–14 (MSEQSSSSRYQQLQ) has biased composition (polar residues). A disordered region spans residues 1-40 (MSEQSSSSRYQQLQNEEEPGENAQASADAPPPYSSIAGES). Residues 1–107 (MSEQSSSSRY…ADQLRIGNDG (107 aa)) are Cytoplasmic-facing. 2 short sequence motifs (PPxY motif) span residues 30 to 33 (PPPY) and 55 to 58 (PPSY). A helical membrane pass occupies residues 108-128 (IFMLTFFMAFLFNWIGFFLSF). Over 129–134 (CLTSSA) the chain is Extracellular. Residues 135 to 155 (AGRYGAISGFGLSLIKWILIV) traverse the membrane as a helical segment. Topologically, residues 156-163 (RFSTYFPG) are cytoplasmic. Residues 164 to 184 (YFDGQYWLWWVFLVLGFLLFL) traverse the membrane as a helical segment. Residues 185–212 (RGFINYAKVRKMPDNFSTLPRTRVLFIY) are Extracellular-facing.

Its subcellular location is the golgi apparatus membrane. May play a role in Golgi structure maintenance. The polypeptide is NEDD4 family-interacting protein 1 (ndfip1) (Xenopus laevis (African clawed frog)).